Reading from the N-terminus, the 507-residue chain is Histidine ammonia-lyase (507 aa).

Residues 141–143 (ASG) constitute a cross-link (5-imidazolinone (Ala-Gly)). The residue at position 142 (serine 142) is a 2,3-didehydroalanine (Ser).

The protein belongs to the PAL/histidase family. Contains an active site 4-methylidene-imidazol-5-one (MIO), which is formed autocatalytically by cyclization and dehydration of residues Ala-Ser-Gly.

The protein resides in the cytoplasm. It catalyses the reaction L-histidine = trans-urocanate + NH4(+). It participates in amino-acid degradation; L-histidine degradation into L-glutamate; N-formimidoyl-L-glutamate from L-histidine: step 1/3. The protein is Histidine ammonia-lyase of Cereibacter sphaeroides (strain ATCC 17023 / DSM 158 / JCM 6121 / CCUG 31486 / LMG 2827 / NBRC 12203 / NCIMB 8253 / ATH 2.4.1.) (Rhodobacter sphaeroides).